Reading from the N-terminus, the 259-residue chain is MSSQSPKRMYGTGNNFVIIDSRSINNLNWNYREIANQNGCDQIIVITNSSAADCFMHIYNADGGEVEMCGNAARCVGYLIMSEKSTEYATIELVNKRILECFKVGGRSIKVNMGKPLFKWHEIPLSAKCDPLHLPIELEMLKDPVAVNIGNPHMVFFVDNISEIPLQSLGPKLEKHTLFPKKVNVNIAQVEKSGEISLRVWERGTGITASCGSAACAALIASVLRGYLITRQTSVNLPGGKLLIEWPDNIFMTGDIGFL.

The substrate site is built by Asn-14, Gln-42, and Asn-60. The active-site Proton donor is the Cys-69. Substrate-binding positions include 70–71 (GN), Asn-151, Asn-184, and 202–203 (ER). Cys-211 acts as the Proton acceptor in catalysis. 212–213 (GS) is a substrate binding site.

It belongs to the diaminopimelate epimerase family. As to quaternary structure, homodimer.

It is found in the cytoplasm. The enzyme catalyses (2S,6S)-2,6-diaminopimelate = meso-2,6-diaminopimelate. It participates in amino-acid biosynthesis; L-lysine biosynthesis via DAP pathway; DL-2,6-diaminopimelate from LL-2,6-diaminopimelate: step 1/1. Catalyzes the stereoinversion of LL-2,6-diaminopimelate (L,L-DAP) to meso-diaminopimelate (meso-DAP), a precursor of L-lysine and an essential component of the bacterial peptidoglycan. The chain is Diaminopimelate epimerase from Wolbachia sp. subsp. Brugia malayi (strain TRS).